Consider the following 197-residue polypeptide: NAD(P)H-quinone oxidoreductase subunit 6, chloroplastic (197 aa).

The next 5 helical transmembrane spans lie at 10–30 (FVLALVELGILLGSLGAVLLV), 39–59 (LGLVFTCISLLYFVLNADFVA), 60–80 (AAQLLVYVGAINVLTVFAVMI), 94–114 (IGYIITAGTCTILFSILSFVI), and 147–167 (LLGEFVIPFELLSILLLAALV).

The protein belongs to the complex I subunit 6 family. In terms of assembly, NDH is composed of at least 16 different subunits, 5 of which are encoded in the nucleus.

It is found in the plastid. The protein localises to the chloroplast thylakoid membrane. The catalysed reaction is a plastoquinone + NADH + (n+1) H(+)(in) = a plastoquinol + NAD(+) + n H(+)(out). It carries out the reaction a plastoquinone + NADPH + (n+1) H(+)(in) = a plastoquinol + NADP(+) + n H(+)(out). Its function is as follows. NDH shuttles electrons from NAD(P)H:plastoquinone, via FMN and iron-sulfur (Fe-S) centers, to quinones in the photosynthetic chain and possibly in a chloroplast respiratory chain. The immediate electron acceptor for the enzyme in this species is believed to be plastoquinone. Couples the redox reaction to proton translocation, and thus conserves the redox energy in a proton gradient. The sequence is that of NAD(P)H-quinone oxidoreductase subunit 6, chloroplastic (ndhG) from Adiantum capillus-veneris (Maidenhair fern).